The primary structure comprises 520 residues: Laccase-4 (520 aa).

The signal sequence occupies residues 1 to 18; sequence MGRFSSLCALTAVIHSFG. Plastocyanin-like domains are found at residues 24–149, 161–303, and 370–491; these read IGPV…MVVY, VDDE…ILRY, and TVPV…FSED. 2 N-linked (GlcNAc...) asparagine glycosylation sites follow: N73 and N76. Cu cation-binding residues include H86, H88, H131, and H133. Disulfide bonds link C107–C509 and C139–C227. N-linked (GlcNAc...) asparagine glycosylation is found at N239 and N399. Cu cation contacts are provided by H418, H421, H423, H473, C474, H475, and H479. An N-linked (GlcNAc...) asparagine glycan is attached at N497.

This sequence belongs to the multicopper oxidase family. As to quaternary structure, homodimer. It depends on Cu cation as a cofactor.

It is found in the secreted. It carries out the reaction 4 hydroquinone + O2 = 4 benzosemiquinone + 2 H2O. Functionally, lignin degradation and detoxification of lignin-derived products. The chain is Laccase-4 (LCC4) from Trametes villosa (White-rot fungus).